The sequence spans 172 residues: Ribosome maturation factor RimM (172 aa).

Residues 92–167 (ENEFYHSDLV…VILKLPEIIG (76 aa)) enclose the PRC barrel domain.

The protein belongs to the RimM family. In terms of assembly, binds ribosomal protein uS19.

Its subcellular location is the cytoplasm. Its function is as follows. An accessory protein needed during the final step in the assembly of 30S ribosomal subunit, possibly for assembly of the head region. Essential for efficient processing of 16S rRNA. May be needed both before and after RbfA during the maturation of 16S rRNA. It has affinity for free ribosomal 30S subunits but not for 70S ribosomes. This is Ribosome maturation factor RimM from Ehrlichia ruminantium (strain Gardel).